A 291-amino-acid polypeptide reads, in one-letter code: Acetyl-coenzyme A carboxylase carboxyl transferase subunit beta (291 aa).

The 263-residue stretch at 29-291 (IMTKCPDCKK…TGGDLEWLEN (263 aa)) folds into the CoA carboxyltransferase N-terminal domain. Residues C33, C36, C52, and C55 each coordinate Zn(2+). A C4-type zinc finger spans residues 33-55 (CPDCKKIMLTKELDKNLRVCMNC).

This sequence belongs to the AccD/PCCB family. In terms of assembly, acetyl-CoA carboxylase is a heterohexamer composed of biotin carboxyl carrier protein (AccB), biotin carboxylase (AccC) and two subunits each of ACCase subunit alpha (AccA) and ACCase subunit beta (AccD). The cofactor is Zn(2+).

The protein localises to the cytoplasm. It carries out the reaction N(6)-carboxybiotinyl-L-lysyl-[protein] + acetyl-CoA = N(6)-biotinyl-L-lysyl-[protein] + malonyl-CoA. It participates in lipid metabolism; malonyl-CoA biosynthesis; malonyl-CoA from acetyl-CoA: step 1/1. Functionally, component of the acetyl coenzyme A carboxylase (ACC) complex. Biotin carboxylase (BC) catalyzes the carboxylation of biotin on its carrier protein (BCCP) and then the CO(2) group is transferred by the transcarboxylase to acetyl-CoA to form malonyl-CoA. The polypeptide is Acetyl-coenzyme A carboxylase carboxyl transferase subunit beta (Bacillus licheniformis (strain ATCC 14580 / DSM 13 / JCM 2505 / CCUG 7422 / NBRC 12200 / NCIMB 9375 / NCTC 10341 / NRRL NRS-1264 / Gibson 46)).